A 260-amino-acid polypeptide reads, in one-letter code: Glutamate racemase (260 aa).

Substrate contacts are provided by residues 7–8 (DS) and 39–40 (YG). The active-site Proton donor/acceptor is the Cys-71. Substrate is bound at residue 72–73 (NT). The Proton donor/acceptor role is filled by Cys-182. Position 183 to 184 (183 to 184 (TH)) interacts with substrate.

This sequence belongs to the aspartate/glutamate racemases family.

The catalysed reaction is L-glutamate = D-glutamate. It participates in cell wall biogenesis; peptidoglycan biosynthesis. Functionally, provides the (R)-glutamate required for cell wall biosynthesis. The chain is Glutamate racemase from Sulfurihydrogenibium sp. (strain YO3AOP1).